The chain runs to 444 residues: MQVSLETTTGLERKLTVGIPASVVDQEVAKRLKEAAKTVRINGFRKGKVPMSVVQQRYGAGVRQEVLGDAINRSFYDAVRKESLRPAGQPAIEPKQLEPGKDIEFVATFEVYPEIEVSGLESIEVTRYNAEVTDADVDTMIETLQKSQADWAPVKRKSKKGDRVVIDFKGTKDGEAFEGGTAEGQTLVLGSNSMIPGFEKGIIGMKAGETETIKVTFPDDYQEESLRGAEAEFEVTVQKVEGQKLPKLDDEFFAKFGVTEGGEEKFRADVRENMEREKQKALKGKLKEQVMNGLVAANTVDIPKSLVSGEIDALRNQMGNQMMQQYGSQAEGIDFKSILPDDMFKEQAERRVALGLIVSEIVKNEKISVDKELVKSLIEDVASTYEHPEEVVNYYYGNEQLLGGVEAAALEEQVVSLVLSKAKVSDETISYEEAVKPAAKQAEE.

The 86-residue stretch at Gly161–Pro246 folds into the PPIase FKBP-type domain.

This sequence belongs to the FKBP-type PPIase family. Tig subfamily.

It localises to the cytoplasm. The catalysed reaction is [protein]-peptidylproline (omega=180) = [protein]-peptidylproline (omega=0). Involved in protein export. Acts as a chaperone by maintaining the newly synthesized protein in an open conformation. Functions as a peptidyl-prolyl cis-trans isomerase. The chain is Trigger factor from Saccharophagus degradans (strain 2-40 / ATCC 43961 / DSM 17024).